Reading from the N-terminus, the 236-residue chain is Small ribosomal subunit protein uS2c (236 aa).

Belongs to the universal ribosomal protein uS2 family.

The protein resides in the plastid. It is found in the chloroplast. The chain is Small ribosomal subunit protein uS2c (rps2) from Nicotiana tabacum (Common tobacco).